The following is a 750-amino-acid chain: Glycerophosphodiester phosphodiesterase GDPDL7 (750 aa).

A signal peptide spans 1-17 (MLRFIIFFSLFIHLCVA). GP-PDE domains follow at residues 41 to 339 (PAVV…SQSI) and 355 to 654 (ALVI…TRYL). 4 N-linked (GlcNAc...) asparagine glycosylation sites follow: Asn134, Asn304, Asn603, and Asn716.

The protein belongs to the glycerophosphoryl diester phosphodiesterase family. In terms of tissue distribution, expressed in flowers and siliques.

It carries out the reaction a sn-glycero-3-phosphodiester + H2O = an alcohol + sn-glycerol 3-phosphate + H(+). In Arabidopsis thaliana (Mouse-ear cress), this protein is Glycerophosphodiester phosphodiesterase GDPDL7.